The sequence spans 360 residues: UDP-N-acetylglucosamine--N-acetylmuramyl-(pentapeptide) pyrophosphoryl-undecaprenol N-acetylglucosamine transferase (360 aa).

UDP-N-acetyl-alpha-D-glucosamine is bound by residues S198 and Q289.

The protein belongs to the glycosyltransferase 28 family. MurG subfamily.

It is found in the cell membrane. It catalyses the reaction Mur2Ac(oyl-L-Ala-gamma-D-Glu-L-Lys-D-Ala-D-Ala)-di-trans,octa-cis-undecaprenyl diphosphate + UDP-N-acetyl-alpha-D-glucosamine = beta-D-GlcNAc-(1-&gt;4)-Mur2Ac(oyl-L-Ala-gamma-D-Glu-L-Lys-D-Ala-D-Ala)-di-trans,octa-cis-undecaprenyl diphosphate + UDP + H(+). The protein operates within cell wall biogenesis; peptidoglycan biosynthesis. Its function is as follows. Cell wall formation. Catalyzes the transfer of a GlcNAc subunit on undecaprenyl-pyrophosphoryl-MurNAc-pentapeptide (lipid intermediate I) to form undecaprenyl-pyrophosphoryl-MurNAc-(pentapeptide)GlcNAc (lipid intermediate II). The polypeptide is UDP-N-acetylglucosamine--N-acetylmuramyl-(pentapeptide) pyrophosphoryl-undecaprenol N-acetylglucosamine transferase (Streptococcus pyogenes serotype M12 (strain MGAS2096)).